A 633-amino-acid polypeptide reads, in one-letter code: Glutamyl-tRNA(Gln) amidotransferase subunit E (633 aa).

Belongs to the GatB/GatE family. GatE subfamily. As to quaternary structure, heterodimer of GatD and GatE.

It catalyses the reaction L-glutamyl-tRNA(Gln) + L-glutamine + ATP + H2O = L-glutaminyl-tRNA(Gln) + L-glutamate + ADP + phosphate + H(+). Functionally, allows the formation of correctly charged Gln-tRNA(Gln) through the transamidation of misacylated Glu-tRNA(Gln) in organisms which lack glutaminyl-tRNA synthetase. The reaction takes place in the presence of glutamine and ATP through an activated gamma-phospho-Glu-tRNA(Gln). The GatDE system is specific for glutamate and does not act on aspartate. The polypeptide is Glutamyl-tRNA(Gln) amidotransferase subunit E (Saccharolobus islandicus (strain L.S.2.15 / Lassen #1) (Sulfolobus islandicus)).